The sequence spans 45 residues: Mu-conotoxin-like Cal 12.1.2d (45 aa).

Cystine bridges form between C3–C16, C11–C28, C18–C33, and C27–C39. A 6'-bromotryptophan modification is found at W17. The residue at position 23 (P23) is a 4-hydroxyproline. Residues W37 and W38 each carry the 6'-bromotryptophan modification. P40 is modified (4-hydroxyproline).

Expressed by the venom duct.

The protein localises to the secreted. Its function is as follows. Mu-conotoxins block voltage-gated sodium channels. This toxin reversibly blocks voltage-gated sodium channel in cephalopods, with no alteration in the voltage dependence of sodium conductance or on the kinetics of inactivation. The polypeptide is Mu-conotoxin-like Cal 12.1.2d (Californiconus californicus (California cone)).